A 270-amino-acid polypeptide reads, in one-letter code: tRNA pseudouridine synthase A (270 aa).

Catalysis depends on Asp60, which acts as the Nucleophile. Residues Phe107–Phe111 are RNA binding. Residue Tyr118 coordinates substrate. The tract at residues Gln168–Arg172 is interaction with tRNA.

It belongs to the tRNA pseudouridine synthase TruA family. In terms of assembly, homodimer.

It carries out the reaction uridine(38/39/40) in tRNA = pseudouridine(38/39/40) in tRNA. Functionally, formation of pseudouridine at positions 38, 39 and 40 in the anticodon stem and loop of transfer RNAs. This chain is tRNA pseudouridine synthase A, found in Escherichia coli (strain K12 / DH10B).